Reading from the N-terminus, the 140-residue chain is Large ribosomal subunit protein uL16 (140 aa).

A compositionally biased stretch (basic residues) spans 1 to 17 (MPLMPKRVKHRKMHRGS). The tract at residues 1-21 (MPLMPKRVKHRKMHRGSRSGN) is disordered.

It belongs to the universal ribosomal protein uL16 family. As to quaternary structure, part of the 50S ribosomal subunit.

In terms of biological role, binds 23S rRNA and is also seen to make contacts with the A and possibly P site tRNAs. The sequence is that of Large ribosomal subunit protein uL16 from Akkermansia muciniphila (strain ATCC BAA-835 / DSM 22959 / JCM 33894 / BCRC 81048 / CCUG 64013 / CIP 107961 / Muc).